A 172-amino-acid chain; its full sequence is Protein-export protein SecB (172 aa).

The protein belongs to the SecB family. Homotetramer, a dimer of dimers. One homotetramer interacts with 1 SecA dimer.

It is found in the cytoplasm. Functionally, one of the proteins required for the normal export of preproteins out of the cell cytoplasm. It is a molecular chaperone that binds to a subset of precursor proteins, maintaining them in a translocation-competent state. It also specifically binds to its receptor SecA. The polypeptide is Protein-export protein SecB (Xylella fastidiosa (strain Temecula1 / ATCC 700964)).